The chain runs to 40 residues: Photosystem II reaction center protein J (40 aa).

Residues 8-28 traverse the membrane as a helical segment; the sequence is IPLWLVATVAGLAAIGVLGIF.

The protein belongs to the PsbJ family. As to quaternary structure, PSII is composed of 1 copy each of membrane proteins PsbA, PsbB, PsbC, PsbD, PsbE, PsbF, PsbH, PsbI, PsbJ, PsbK, PsbL, PsbM, PsbT, PsbX, PsbY, PsbZ, Psb30/Ycf12, at least 3 peripheral proteins of the oxygen-evolving complex and a large number of cofactors. It forms dimeric complexes.

It is found in the plastid. The protein localises to the cyanelle thylakoid membrane. In terms of biological role, one of the components of the core complex of photosystem II (PSII). PSII is a light-driven water:plastoquinone oxidoreductase that uses light energy to abstract electrons from H(2)O, generating O(2) and a proton gradient subsequently used for ATP formation. It consists of a core antenna complex that captures photons, and an electron transfer chain that converts photonic excitation into a charge separation. This Cyanophora paradoxa protein is Photosystem II reaction center protein J.